The following is an 81-amino-acid chain: Sec-independent protein translocase protein TatA (81 aa).

The helical transmembrane segment at 1-21 (MGGLQPWHWVIVIAVFVLLFG) threads the bilayer. Over residues 46-56 (MQAESKGDEPK) the composition is skewed to basic and acidic residues. Positions 46 to 81 (MQAESKGDEPKPATPIASERVDTTAPEQQSTDRHTA) are disordered.

This sequence belongs to the TatA/E family. As to quaternary structure, the Tat system comprises two distinct complexes: a TatABC complex, containing multiple copies of TatA, TatB and TatC subunits, and a separate TatA complex, containing only TatA subunits. Substrates initially bind to the TatABC complex, which probably triggers association of the separate TatA complex to form the active translocon.

It is found in the cell membrane. In terms of biological role, part of the twin-arginine translocation (Tat) system that transports large folded proteins containing a characteristic twin-arginine motif in their signal peptide across membranes. TatA could form the protein-conducting channel of the Tat system. The polypeptide is Sec-independent protein translocase protein TatA (Mycolicibacterium smegmatis (strain ATCC 700084 / mc(2)155) (Mycobacterium smegmatis)).